The sequence spans 248 residues: 3-deoxy-manno-octulosonate cytidylyltransferase 2 (248 aa).

Belongs to the KdsB family.

It is found in the cytoplasm. It catalyses the reaction 3-deoxy-alpha-D-manno-oct-2-ulosonate + CTP = CMP-3-deoxy-beta-D-manno-octulosonate + diphosphate. Its pathway is nucleotide-sugar biosynthesis; CMP-3-deoxy-D-manno-octulosonate biosynthesis; CMP-3-deoxy-D-manno-octulosonate from 3-deoxy-D-manno-octulosonate and CTP: step 1/1. It functions in the pathway bacterial outer membrane biogenesis; lipopolysaccharide biosynthesis. Activates KDO (a required 8-carbon sugar) for incorporation into bacterial lipopolysaccharide in Gram-negative bacteria. The sequence is that of 3-deoxy-manno-octulosonate cytidylyltransferase 2 from Hydrogenovibrio crunogenus (strain DSM 25203 / XCL-2) (Thiomicrospira crunogena).